The primary structure comprises 2303 residues: Genome polyprotein (2303 aa).

A zinc finger spans residues C3–C14. The acidic stretch occupies residues D30 to D46. The segment at M60–M73 is theilo. The segment at E74–E93 is disordered. A lipid anchor (N-myristoyl glycine; by host) is attached at G77. A compositionally biased stretch (low complexity) spans N78 to N92. Residues C501 and C503 are joined by a disulfide bond. Residues Y1041–I1047 are host EIF4E binding. Residues I1283 to V1448 enclose the SF3 helicase domain. G1312 to S1319 serves as a coordination point for ATP. The residue at position 1608 (Y1608) is an O-(5'-phospho-RNA)-tyrosine. One can recognise a Peptidase C3 domain in the interval N1636–I1829. Residues H1680, D1714, and C1793 each act as for protease 3C activity in the active site. Positions N2071–L2189 constitute a RdRp catalytic domain. Active-site for RdRp activity residues include D2077 and D2175.

Belongs to the picornaviruses polyprotein family. In terms of assembly, interacts with host EIF4E. Interacts with the leader protein. As to quaternary structure, interacts with host RAN; the complex L-RAN recruits cellular kinases responsible for the L-induced nucleocytoplasmic trafficking inhibition. The complex L-RAN can further bind to the host exportins XPO1/CRM1 and CSE1L/CAS. Interacts with the protein 2A. Interacts with host RNASEL; this interaction prevents RNASEL activation by its substrate 2'-5' oligoadenylates. Post-translationally, phosphorylated. In terms of processing, specific enzymatic cleavages by the viral protease in vivo yield a variety of precursors and mature proteins. The polyprotein seems to be cotranslationally cleaved at the 2A/2B junction by a ribosomal skip from one codon to the next without formation of a peptide bond. This process would release the P1-2A peptide from the translational complex. During virion maturation, immature virions are rendered infectious following cleavage of VP0 into VP4 and VP2. This maturation seems to be an autocatalytic event triggered by the presence of RNA in the capsid and is followed by a conformational change of the particle. Post-translationally, uridylylated by the polymerase and is covalently linked to the 5'-end of genomic RNA. This uridylylated form acts as a nucleotide-peptide primer for the polymerase. In terms of processing, myristoylation is required during RNA encapsidation and formation of the mature virus particle.

It is found in the virion. Its subcellular location is the host cytoplasm. It localises to the host nucleus. The protein resides in the host nucleolus. The protein localises to the host cytoplasmic vesicle membrane. It catalyses the reaction RNA(n) + a ribonucleoside 5'-triphosphate = RNA(n+1) + diphosphate. It carries out the reaction ATP + H2O = ADP + phosphate + H(+). The enzyme catalyses Selective cleavage of Gln-|-Gly bond in the poliovirus polyprotein. In other picornavirus reactions Glu may be substituted for Gln, and Ser or Thr for Gly.. Forms a complex with host RAN and probably binds to exportins carrying activated MAPK in order to mediate the hyperphosphorylation of host Phe/Gly containing nuclear pore proteins (Nups) resulting in cessation of active nucleocytoplasmic transport. Proteins with NLS signals fail to import, cellular mRNAs fail to export, and some proteins small enough for diffusion are not retained anymore (efflux). The resulting inhibition of cellular protein synthesis serves to ensure maximal viral gene expression and to evade host immune response. The leader protein also inhibits host interferon regulatory factor 3 (IRF3) dimerization, thereby blocking the transcriptional activation of IFN genes. Binds to host RNase L thereby preventing its activation by 2'-5' oligoadenylates in order to counteract the antiviral interferon-inducible OAS/RNase L pathway. Inhibits the integrated stress response (ISR) in the infected cell. Inhibits the host EIF2AK2/PKR by rendering this kinase unable to detect double-stranded RNA. Also impairs host stress granule formation probably by acting on a step downstream of EIF2AK2/PKR activation. Its function is as follows. Forms an icosahedral capsid of pseudo T=3 symmetry with capsid proteins VP2 and VP3. Together they form an icosahedral capsid composed of 60 copies of each VP1, VP2, and VP3, with a diameter of approximately 300 Angstroms. VP4 lies on the inner surface of the protein shell formed by VP1, VP2 and VP3. All the three latter proteins contain a beta-sheet structure called beta-barrel jelly roll. VP1 is situated at the 12 fivefold axes, whereas VP2 and VP3 are located at the quasi-sixfold axes. In terms of biological role, lies on the inner surface of the capsid shell. After binding to the host receptor, the capsid undergoes conformational changes. Capsid protein VP4 is released, capsid protein VP1 N-terminus is externalized, and together, they shape a pore in the host membrane through which the viral genome is translocated into the host cell cytoplasm. After genome has been released, the channel shrinks. Functionally, VP0 precursor is a component of immature procapsids. Involved in host translation shutoff by inhibiting cap-dependent mRNA translation. Nuclear localization is required for this function. The resulting inhibition of cellular protein synthesis serves to ensure maximal viral gene expression and to evade host immune response. Inhibits the phosphorylation of the leader protein. Its function is as follows. Affects membrane integrity and causes an increase in membrane permeability. In terms of biological role, associates with and induces structural rearrangements of intracellular membranes. It displays RNA-binding, nucleotide binding and NTPase activities. Functionally, serves as membrane anchor via its hydrophobic domain. Forms a primer, VPg-pU, which is utilized by the polymerase for the initiation of RNA chains. Its function is as follows. Cysteine protease that generates mature viral proteins from the precursor polyprotein. In addition to its proteolytic activity, it binds to viral RNA, and thus influences viral genome replication. RNA and substrate cooperatively bind to the protease. Cleaves host PABP1, this cleavage is important for viral replication. In terms of biological role, replicates the genomic and antigenomic RNAs by recognizing replications specific signals. Performs VPg uridylylation. In Mus musculus (Mouse), this protein is Genome polyprotein.